We begin with the raw amino-acid sequence, 721 residues long: MRTAEESSGTVLHRLIQEQLRYGNPTDPTLLAIQQQALRGGSSGGGAGSPRSSLESLTQEESLSPQLSARQEPQGQEHQGDFQHSESPVCHLYQLHTEELPTYEEAKAHSQYLAYQRGQIGLHQGSLESPGGVGGAEQDDSMWDAKREHARSLSERLLQLSLERNCAHDNIPMSSSHSYPQLSNNHSDTVVNEQSVHQPDQRGPPPEYPFMVRSPGYMLSHSQEHGHYYNEPPPAFHSQHYRLFPTQPQAPRHNGLPTLTPAGQDVNVGGYSIPANNFQMEQLIKENERLKREVDSYSEKAARLQKLEQEIQRISEAYETLMKGSAKREALEKTMRNKLESEIKRLHDFNRDLRDRLETANKQRAAIEVEDKSRHAFAKLVEQNEDHLRERERLEKETQHLRASGEEWKRRREALEQALITAQTRNRQLEEELRRKRAYVEKVERMQSALAQLQAACEKREALELRLRTRLEQELKSLRAQQWQAQTQHASPGSYLDLNVSSLQQQLREREEQVLALEADITRWEQKYLEESTMRQFAMDAAATAAAQRDTTIINHSPRNSPNSSFNEDLPSPNHRHQEMENRIRALYAQLLEKDAIIKVMQQRSRREQGRPELQGLRPARSVPSINTVATASTTRAKGKSLSDDQTAVASLPPLPHLLAKIQCRDSSTQCDSEEPSCKAEPADVAVSAPEPSTASSSESTSLKTTQISSAVENDMVEILI.

Positions 35-84 (QQALRGGSSGGGAGSPRSSLESLTQEESLSPQLSARQEPQGQEHQGDFQH) are disordered. Low complexity predominate over residues 49–68 (SPRSSLESLTQEESLSPQLS). The residue at position 103 (Tyr103) is a Phosphotyrosine; by FGFR1. Positions 169-214 (DNIPMSSSHSYPQLSNNHSDTVVNEQSVHQPDQRGPPPEYPFMVRS) are disordered. Residues 172–198 (PMSSSHSYPQLSNNHSDTVVNEQSVHQ) show a composition bias toward polar residues. Residues 275–531 (ANNFQMEQLI…TRWEQKYLEE (257 aa)) are a coiled coil. The segment covering 554–567 (INHSPRNSPNSSFN) has biased composition (polar residues). Disordered stretches follow at residues 554–575 (INHS…SPNH) and 666–709 (DSST…TQIS). Residues 688 to 702 (SAPEPSTASSSESTS) are compositionally biased toward low complexity. The PDZ-binding signature appears at 718 to 721 (EILI).

The protein belongs to the angiomotin family. In terms of assembly, interacts with SRC. In terms of processing, phosphorylation at Tyr-103 is necessary for efficient binding to SRC and synergistically functioning with SRC to activate the downstream MAPK pathway. Expressed in endothelial cells.

It is found in the recycling endosome. The protein resides in the cytoplasm. It localises to the cell projection. Its subcellular location is the podosome. The protein localises to the cell junction. In terms of biological role, required for proper architecture of actin filaments and for cell movements during embryogenesis. Plays a role in the radial actin fiber architecture in skin epithelial cells, thereby maintains cell geometry, size and cell interconnectivity within the skin. Plays an important role in coupling actin fibers to cell junctions in endothelial cells and is therefore required for correct endothelial cell morphology and maintenance of dorsal aorta lumen expansion during embryogenesis. May further play a role in the polarity, proliferation and migration of endothelial cells, and therefore participates in angiogenesis. Inhibits the Wnt/beta-catenin signaling pathway, probably by recruiting CTNNB1 to recycling endosomes and hence preventing its translocation to the nucleus. Regulates the translocation of phosphorylated SRC to peripheral cell-matrix adhesion sites. Selectively promotes FGF-induced MAPK activation through SRC. This is Angiomotin-like 2a (amotl2a) from Danio rerio (Zebrafish).